The sequence spans 51 residues: Large ribosomal subunit protein bL33 (51 aa).

Belongs to the bacterial ribosomal protein bL33 family.

This Nitrosospira multiformis (strain ATCC 25196 / NCIMB 11849 / C 71) protein is Large ribosomal subunit protein bL33.